The sequence spans 81 residues: Cortexin-3 (81 aa).

Residues 29 to 49 (MTFVFVILLFIFLGILIVRCF) traverse the membrane as a helical segment.

Belongs to the cortexin family.

It is found in the membrane. In Homo sapiens (Human), this protein is Cortexin-3 (CTXN3).